A 157-amino-acid polypeptide reads, in one-letter code: Aspartate carbamoyltransferase regulatory chain (157 aa).

Residues C108, C113, C138, and C141 each coordinate Zn(2+).

Belongs to the PyrI family. As to quaternary structure, contains catalytic and regulatory chains. Requires Zn(2+) as cofactor.

In terms of biological role, involved in allosteric regulation of aspartate carbamoyltransferase. The chain is Aspartate carbamoyltransferase regulatory chain from Ignicoccus hospitalis (strain KIN4/I / DSM 18386 / JCM 14125).